Reading from the N-terminus, the 66-residue chain is MDPPARKEKTKVKESVSRVEKAKQKSAQQELKQRQRAEIYALNRVMTELEQQQFDEFCKQMQPPGE.

Basic and acidic residues predominate over residues Met1–Lys23. A disordered region spans residues Met1–Leu31. Residues Ala5–Gln52 adopt a coiled-coil conformation.

Belongs to the SVBP family. Interacts with VASH1 and VASH2.

The protein localises to the cytoplasm. It is found in the secreted. The protein resides in the cytoskeleton. Enhances the tyrosine carboxypeptidase activity of VASH1 and VASH2, thereby promoting the removal of the C-terminal tyrosine residue of alpha-tubulin. This activity is critical for spindle function and accurate chromosome segregation during mitosis since microtubule detyronisation regulates mitotic spindle length and postioning. Also required to enhance the solubility and secretion of VASH1 and VASH2. Plays a role in axon and excitatory synapse formation. In Homo sapiens (Human), this protein is Small vasohibin-binding protein.